The following is a 336-amino-acid chain: Tyrosine phosphatase-like protein H1 (336 aa).

In terms of domain architecture, Tyrosine-protein phosphatase spans 27–295 (IKKEHHKLMK…EICYRVLCEA (269 aa)).

The protein belongs to the protein-tyrosine phosphatase family.

This is Tyrosine phosphatase-like protein H1 (H1) from Microplitis demolitor (Parasitoid wasp).